The primary structure comprises 283 residues: Pantothenate synthetase (283 aa).

Residue 30–37 (MGALHEGH) participates in ATP binding. The active-site Proton donor is H37. Q61 is a (R)-pantoate binding site. Q61 lines the beta-alanine pocket. 147-150 (GEKD) is a binding site for ATP. Q153 is a (R)-pantoate binding site. Residues V176 and 184–187 (VSSR) contribute to the ATP site.

Belongs to the pantothenate synthetase family. As to quaternary structure, homodimer.

The protein resides in the cytoplasm. It carries out the reaction (R)-pantoate + beta-alanine + ATP = (R)-pantothenate + AMP + diphosphate + H(+). It functions in the pathway cofactor biosynthesis; (R)-pantothenate biosynthesis; (R)-pantothenate from (R)-pantoate and beta-alanine: step 1/1. Its function is as follows. Catalyzes the condensation of pantoate with beta-alanine in an ATP-dependent reaction via a pantoyl-adenylate intermediate. This is Pantothenate synthetase from Chlorobium limicola (strain DSM 245 / NBRC 103803 / 6330).